A 200-amino-acid chain; its full sequence is Cytochrome c biogenesis ATP-binding export protein CcmA (200 aa).

Residues 3-199 (LSGRRVICVR…DSRELRIGGV (197 aa)) form the ABC transporter domain. An ATP-binding site is contributed by 35 to 42 (GRNGSGKT).

It belongs to the ABC transporter superfamily. CcmA exporter (TC 3.A.1.107) family. The complex is composed of two ATP-binding proteins (CcmA) and two transmembrane proteins (CcmB).

The protein resides in the cell inner membrane. It catalyses the reaction heme b(in) + ATP + H2O = heme b(out) + ADP + phosphate + H(+). Its function is as follows. Part of the ABC transporter complex CcmAB involved in the biogenesis of c-type cytochromes; once thought to export heme, this seems not to be the case, but its exact role is uncertain. Responsible for energy coupling to the transport system. This is Cytochrome c biogenesis ATP-binding export protein CcmA from Bradyrhizobium diazoefficiens (strain JCM 10833 / BCRC 13528 / IAM 13628 / NBRC 14792 / USDA 110).